A 158-amino-acid chain; its full sequence is C-type lectin lectoxin-Thr1 (158 aa).

A signal peptide spans 1-23 (MGRFIFATLGLLLVAFSINGAKG). Cystine bridges form between Cys26/Cys37, Cys54/Cys154, and Cys129/Cys146. In terms of domain architecture, C-type lectin spans 33–155 (LKGFCYKVFN…CASTRAYLCK (123 aa)). The short motif at 119 to 121 (EPN) is the Mannose-binding element. Ca(2+)-binding residues include Glu127, Asn142, and Asp143.

This sequence belongs to the true venom lectin family. Expressed by the venom gland.

It is found in the secreted. Functionally, mannose-binding lectin which recognizes specific carbohydrate structures and agglutinates a variety of animal cells by binding to cell-surface glycoproteins and glycolipids. May be a calcium-dependent lectin. The chain is C-type lectin lectoxin-Thr1 from Thrasops jacksonii (Jackson's black tree snake).